The following is a 226-amino-acid chain: Orotate phosphoribosyltransferase 1 (226 aa).

Lysine 30 contacts 5-phospho-alpha-D-ribose 1-diphosphate. 38 to 39 is an orotate binding site; that stretch reads FF. Residues 76 to 77, arginine 106, lysine 107, lysine 110, histidine 112, and 132 to 140 each bind 5-phospho-alpha-D-ribose 1-diphosphate; these read YK and DDVMTAGTA. Residues threonine 136 and arginine 164 each contribute to the orotate site. Phosphoserine is present on residues serine 213 and serine 225.

This sequence belongs to the purine/pyrimidine phosphoribosyltransferase family. PyrE subfamily. Homodimer.

It catalyses the reaction orotidine 5'-phosphate + diphosphate = orotate + 5-phospho-alpha-D-ribose 1-diphosphate. Its pathway is pyrimidine metabolism; UMP biosynthesis via de novo pathway; UMP from orotate: step 1/2. Its function is as follows. Catalyzes the transfer of a ribosyl phosphate group from 5-phosphoribose 1-diphosphate to orotate, leading to the formation of orotidine monophosphate (OMP). The chain is Orotate phosphoribosyltransferase 1 (URA5) from Saccharomyces cerevisiae (strain ATCC 204508 / S288c) (Baker's yeast).